We begin with the raw amino-acid sequence, 179 residues long: Putative ADP-ribosylation factor-like protein 5C (179 aa).

Gly-2 carries N-myristoyl glycine lipidation. GTP contacts are provided by residues 23–30 (GLDNEGKT), 66–70 (DIVRP), and 125–128 (NKQD).

It belongs to the small GTPase superfamily. Arf family.

Binds and exchanges GTP and GDP. The sequence is that of Putative ADP-ribosylation factor-like protein 5C (ARL5C) from Homo sapiens (Human).